The chain runs to 98 residues: NADH-ubiquinone oxidoreductase chain 4L (98 aa).

Transmembrane regions (helical) follow at residues 1 to 21 (MTLI…GLLM), 29 to 49 (ALLC…LTIL), and 61 to 81 (IILL…LVMV).

This sequence belongs to the complex I subunit 4L family. Core subunit of respiratory chain NADH dehydrogenase (Complex I) which is composed of 45 different subunits.

The protein localises to the mitochondrion inner membrane. It carries out the reaction a ubiquinone + NADH + 5 H(+)(in) = a ubiquinol + NAD(+) + 4 H(+)(out). Its function is as follows. Core subunit of the mitochondrial membrane respiratory chain NADH dehydrogenase (Complex I) which catalyzes electron transfer from NADH through the respiratory chain, using ubiquinone as an electron acceptor. Part of the enzyme membrane arm which is embedded in the lipid bilayer and involved in proton translocation. The protein is NADH-ubiquinone oxidoreductase chain 4L (MT-ND4L) of Megaptera novaeangliae (Humpback whale).